The following is a 547-amino-acid chain: Intercellular adhesion molecule 3 (547 aa).

A signal peptide spans 1–29 (MATMVPSVLWPRACWTLLVCCLLTPGVQG). Over 30–485 (QEFLLRVEPQ…VMDIEAGSSH (456 aa)) the chain is Extracellular. The Ig-like C2-type 1 domain maps to 46 to 103 (GGSLFVNCSTDCPSSEKIALETSLSKELVASGMGWAAFNLSNVTGNSRILCSVYCNGS). 6 N-linked (GlcNAc...) asparagine glycosylation sites follow: N52, N84, N87, N101, N110, and N134. 2 disulfide bridges follow: C53–C96 and C57–C100. In terms of domain architecture, Ig-like C2-type 2 spans 132–197 (GQNFTLRCQV…FSCRTELDMQ (66 aa)). Cysteines 139 and 190 form a disulfide. N206, N264, N295, N308, N320, N363, N389, N453, and N457 each carry an N-linked (GlcNAc...) asparagine glycan. Positions 234 to 301 (ETSWPVDCTL…IVCNVTLGGE (68 aa)) constitute an Ig-like C2-type 3 domain. An intrachain disulfide couples C241 to C294. Positions 329–382 (GSTVTVSCMAGARVQVTLDGVPAAAPGQPAQLQLNATESDDGRSFFCSATLEVD) constitute an Ig-like C2-type 4 domain. Residues C336 and C375 are joined by a disulfide bond. Residues 416–469 (KTRHVLQCQARGNPYPELRCLKEGSSREVPVGIPFFVNVTHNGTYQCQASSSRG) form the Ig-like C2-type 5 domain. C423 and C462 are joined by a disulfide. Residues 486 to 510 (FVPVFVAVLLTLGVVTIVLALMYVF) form a helical membrane-spanning segment. Over 511-547 (REHQRSGSYHVREESTYLPLTSMQPTEAMGEEPSRAE) the chain is Cytoplasmic.

The protein belongs to the immunoglobulin superfamily. ICAM family. Interacts with moesin/MSN. Post-translationally, upon stimulation by a physiologic stimuli becomes rapidly and transiently phosphorylated on serine residues. N-glycosylated; glycans consist of a mixture of tri- and tetra-antennary complex-type chains and high-mannose chains. Leukocytes.

Its subcellular location is the membrane. Functionally, ICAM proteins are ligands for the leukocyte adhesion protein LFA-1 (integrin alpha-L/beta-2). ICAM3 is also a ligand for integrin alpha-D/beta-2. In association with integrin alpha-L/beta-2, contributes to apoptotic neutrophil phagocytosis by macrophages. The chain is Intercellular adhesion molecule 3 (ICAM3) from Homo sapiens (Human).